The following is a 107-amino-acid chain: MADKLSSTDAMGCWSPTFCFISLISSSTSELPLFVVEVGIAAYSLEDPPAILSILVLNALEVSSFISTVKKFAFCATKNTNNNNSVVMLKILAFLLLEGIIIKLFLY.

The next 3 helical transmembrane spans lie at 20 to 40 (FISLISSSTSELPLFVVEVGI), 49 to 69 (PAILSILVLNALEVSSFISTV), and 86 to 106 (VVMLKILAFLLLEGIIIKLFL).

It localises to the membrane. This is an uncharacterized protein from Saccharomyces cerevisiae (strain ATCC 204508 / S288c) (Baker's yeast).